The sequence spans 1336 residues: Putative botulinum-like toxin Wo (1336 aa).

Residues 1–476 are has protease activity; sequence MDVLEMFDVN…VAGMQRMVSL (476 aa). Position 250 (H250) interacts with Zn(2+). E251 is a catalytic residue. Residues H254 and E296 each coordinate Zn(2+).

The protein belongs to the peptidase M27 family. Requires Zn(2+) as cofactor.

It carries out the reaction Limited hydrolysis of proteins of the neuroexocytosis apparatus, synaptobrevins, SNAP25 or syntaxin. No detected action on small molecule substrates.. Its activity is regulated as follows. Inhibited by EDTA and 1,10-phenanthroline. Its function is as follows. When overexpressed the N-terminus (residues 1-476) cleaves rat synaptobrevin-2/VAMP2 between '89-Trp-|-Trp-90' in vitro. This releases the cytoplasmic domain of VAMP2 from the synaptic vesicle membrane, which would prevent the assembly of the trans-SNARE complex on the membrane and thus prevent vesicle-target membrane fusion and neurotransmitter release. The protein is Putative botulinum-like toxin Wo of Weissella oryzae (strain DSM 25784 / JCM 18191 / LMG 30913 / SG25).